The chain runs to 829 residues: Cap-specific mRNA (nucleoside-2'-O-)-methyltransferase 1 (829 aa).

Residues 1-68 (MKRAAQASDE…DSQNSQGSMA (68 aa)) are disordered. The Bipartite nuclear localization signal signature appears at 2-16 (KRAAQASDEPLKKRK). A compositionally biased stretch (low complexity) spans 31 to 44 (QRTTSQDSSQSESL). Positions 55–68 (SRPSDSQNSQGSMA) are enriched in polar residues. The region spanning 79 to 125 (YNNVSQKLMAKMGFREGEGLGKYGQGRKEIVEASTQRGRRGLGLMLK) is the G-patch domain. Substrate is bound by residues 195-199 (KTVFD) and arginine 210. One can recognise a RrmJ-type SAM-dependent 2'-O-MTase domain in the interval 223–442 (FFLNRAAMKM…ERYVVCKGLK (220 aa)). Residue asparagine 226 coordinates S-adenosyl-L-methionine. Lysine 231 is an active-site residue. S-adenosyl-L-methionine contacts are provided by residues 269–275 (CAGPGGF) and 327–328 (DI). The active site involves aspartate 356. 366–368 (NLQ) lines the substrate pocket. Lysine 396 functions as the Proton acceptor in the catalytic mechanism. Asparagine 431 provides a ligand contact to substrate. The WW domain maps to 745–779 (KTVNDPWTMAFSKSSKRKFFYNKQTKESTYDLPAT).

The protein localises to the nucleus. It carries out the reaction a 5'-end (N(7)-methyl 5'-triphosphoguanosine)-ribonucleoside in mRNA + S-adenosyl-L-methionine = a 5'-end (N(7)-methyl 5'-triphosphoguanosine)-(2'-O-methyl-ribonucleoside) in mRNA + S-adenosyl-L-homocysteine + H(+). Functionally, S-adenosyl-L-methionine-dependent methyltransferase that mediates mRNA cap1 2'-O-ribose methylation to the 5'-cap structure of mRNAs. Methylates the ribose of the first nucleotide of a m(7)GpppG-capped mRNA and small nuclear RNA (snRNA) to produce m(7)GpppRm (cap1). Displays a preference for cap0 transcripts. Cap1 modification is linked to higher levels of translation. May be involved in the interferon response pathway. This is Cap-specific mRNA (nucleoside-2'-O-)-methyltransferase 1 (cmtr1) from Danio rerio (Zebrafish).